A 378-amino-acid chain; its full sequence is mRNA cap guanine-N(7) methyltransferase (378 aa).

Residues 24–331 (SRIFFMRNMN…MYLVFGFRKK (308 aa)) enclose the mRNA cap 0 methyltransferase domain. 33–34 (NN) provides a ligand contact to mRNA. Positions 37, 62, 84, 116, 138, and 143 each coordinate S-adenosyl-L-methionine. 2 stretches are compositionally biased toward basic and acidic residues: residues 335-347 (EKNL…EIKK) and 356-378 (DTDK…PSHC). Residues 335–378 (EKNLESEAPEIKKVTPVPLNEDTDKTAEKNEERIEEKEENPSHC) are disordered.

This sequence belongs to the class I-like SAM-binding methyltransferase superfamily. mRNA cap 0 methyltransferase family.

It is found in the nucleus. It catalyses the reaction a 5'-end (5'-triphosphoguanosine)-ribonucleoside in mRNA + S-adenosyl-L-methionine = a 5'-end (N(7)-methyl 5'-triphosphoguanosine)-ribonucleoside in mRNA + S-adenosyl-L-homocysteine. Functionally, mRNA-capping methyltransferase that methylates the N7 position of the added guanosine to the 5'-cap structure of mRNAs. Binds RNA containing 5'-terminal GpppC. The protein is mRNA cap guanine-N(7) methyltransferase of Caenorhabditis briggsae.